A 498-amino-acid chain; its full sequence is MIGDFEIKDEDLAGRIGILETKHGKLETPAFFPVINPVKNEITIQDILSVGFESIITNAFLIKKYIGKEEDLHSILNYNKILMTDSGAYQILQYGDIDVSNVDIVNYETKLKPDIAVILDIPTGLTEDKKEAEKSVESTISRAKEASKFVELSKDEIIWVHPIQGGMYLDLIEYSARIADMNQDYKMLALGSPTVLMQRYEYAPLIDMIYKSKSNVSRGKPFHLFGGGHPHIFAFAVALGVDTFDSASYILYARDHRYMTRERVYRLEELDYFPCSCPICSRYSPKDVMEMPEEQKVRLIALHNLYVIKEEINYIKQSLKEGRLFEYIQQKAYSHPSTFEAFRRILNYSKYLEKYDPRVKGEVKGVFLFDNSSLHRPEVIRHAYTLSKIKQRSKALVLYCSDSKDNPLKNTEDMKNADVYIVLPFYGCVPYNVFFTYPYFQSEMPSTIDKDVIYDLKNKLKEFLSQRSYETVSIIGCEKILHVDSIRGAPVNLLLNKL.

Asp85 acts as the Nucleophile in catalysis. A substrate-binding site is contributed by Asp120. The Zn(2+) site is built by Cys275, Cys277, and Cys280.

This sequence belongs to the archaeosine tRNA-ribosyltransferase family. The cofactor is Zn(2+).

It catalyses the reaction guanosine(15) in tRNA + 7-cyano-7-deazaguanine = 7-cyano-7-carbaguanosine(15) in tRNA + guanine. It functions in the pathway tRNA modification; archaeosine-tRNA biosynthesis. Exchanges the guanine residue with 7-cyano-7-deazaguanine (preQ0) at position 15 in the dihydrouridine loop (D-loop) of archaeal tRNAs. In Sulfolobus acidocaldarius (strain ATCC 33909 / DSM 639 / JCM 8929 / NBRC 15157 / NCIMB 11770), this protein is tRNA-guanine(15) transglycosylase.